The following is a 252-amino-acid chain: D-aminoacyl-tRNA deacylase (252 aa).

It belongs to the DtdA deacylase family. Monomer. The cofactor is Zn(2+).

It catalyses the reaction a D-aminoacyl-tRNA + H2O = a tRNA + a D-alpha-amino acid + H(+). It carries out the reaction glycyl-tRNA(Ala) + H2O = tRNA(Ala) + glycine + H(+). Functionally, D-aminoacyl-tRNA deacylase with broad substrate specificity. By recycling D-aminoacyl-tRNA to D-amino acids and free tRNA molecules, this enzyme counteracts the toxicity associated with the formation of D-aminoacyl-tRNA entities in vivo. In Pyrobaculum arsenaticum (strain DSM 13514 / JCM 11321 / PZ6), this protein is D-aminoacyl-tRNA deacylase.